A 29-amino-acid chain; its full sequence is Conotoxin pr6a (29 aa).

3 disulfides stabilise this stretch: Cys2/Cys20, Cys9/Cys24, and Cys19/Cys28.

As to expression, expressed by the venom duct.

Its subcellular location is the secreted. In terms of biological role, intraperitoneal injection into fish (1 nmol) provokes hyperactivity and erratic swimming in various directions after 14 minutes. In Conus parius (Cone snail), this protein is Conotoxin pr6a.